A 693-amino-acid polypeptide reads, in one-letter code: Glycine--tRNA ligase beta subunit (693 aa).

This sequence belongs to the class-II aminoacyl-tRNA synthetase family. Tetramer of two alpha and two beta subunits.

The protein localises to the cytoplasm. It carries out the reaction tRNA(Gly) + glycine + ATP = glycyl-tRNA(Gly) + AMP + diphosphate. The protein is Glycine--tRNA ligase beta subunit (glyS) of Halalkalibacterium halodurans (strain ATCC BAA-125 / DSM 18197 / FERM 7344 / JCM 9153 / C-125) (Bacillus halodurans).